Reading from the N-terminus, the 365-residue chain is uncharacterized protein (365 aa).

31 to 38 (GPINSGKT) contacts ATP.

The protein belongs to the archaeal ATPase family.

This is an uncharacterized protein from Methanocaldococcus jannaschii (strain ATCC 43067 / DSM 2661 / JAL-1 / JCM 10045 / NBRC 100440) (Methanococcus jannaschii).